Here is an 892-residue protein sequence, read N- to C-terminus: Formin-like protein 8 (892 aa).

The first 23 residues, methionine 1–alanine 23, serve as a signal peptide directing secretion. The segment at phenylalanine 43–glycine 119 is disordered. Residues tryptophan 47–proline 59 show a composition bias toward pro residues. Low complexity predominate over residues threonine 87 to glycine 111. The helical transmembrane segment at isoleucine 126–phenylalanine 146 threads the bilayer. The interval proline 188–lysine 457 is disordered. Positions leucine 210–proline 230 are enriched in basic and acidic residues. Low complexity-rich tracts occupy residues alanine 268–serine 286, phenylalanine 297–alanine 306, and arginine 321–proline 330. A compositionally biased stretch (pro residues) spans serine 339–valine 383. A compositionally biased stretch (polar residues) spans alanine 424–methionine 436. An FH2 domain is found at aspartate 446–alanine 867.

It belongs to the formin-like family. Class-I subfamily.

The protein resides in the membrane. The chain is Formin-like protein 8 (FH8) from Oryza sativa subsp. japonica (Rice).